We begin with the raw amino-acid sequence, 323 residues long: L-lactate dehydrogenase 1 (323 aa).

NAD(+) is bound by residues valine 17, aspartate 38, arginine 43, tyrosine 68, and 82–83 (GA). 2 residues coordinate substrate: glutamine 85 and arginine 91. Residues serine 104, 121–123 (AAN), and serine 146 each bind NAD(+). 123–126 (NPVD) contributes to the substrate binding site. A substrate-binding site is contributed by 151–154 (DTGR). The Proton acceptor role is filled by histidine 178. At tyrosine 223 the chain carries Phosphotyrosine. Threonine 232 provides a ligand contact to substrate.

It belongs to the LDH/MDH superfamily. LDH family. Homotetramer.

It is found in the cytoplasm. It carries out the reaction (S)-lactate + NAD(+) = pyruvate + NADH + H(+). It functions in the pathway fermentation; pyruvate fermentation to lactate; (S)-lactate from pyruvate: step 1/1. Catalyzes the conversion of lactate to pyruvate. In Lactobacillus johnsonii (strain CNCM I-12250 / La1 / NCC 533), this protein is L-lactate dehydrogenase 1.